The chain runs to 782 residues: Endonuclease MutS2 (782 aa).

Residue 336–343 participates in ATP binding; that stretch reads GPNTGGKT. A Smr domain is found at 707 to 782; sequence LDLRGYRYED…GFGVTVATLK (76 aa).

This sequence belongs to the DNA mismatch repair MutS family. MutS2 subfamily. In terms of assembly, homodimer. Binds to stalled ribosomes, contacting rRNA.

In terms of biological role, endonuclease that is involved in the suppression of homologous recombination and thus may have a key role in the control of bacterial genetic diversity. Acts as a ribosome collision sensor, splitting the ribosome into its 2 subunits. Detects stalled/collided 70S ribosomes which it binds and splits by an ATP-hydrolysis driven conformational change. Acts upstream of the ribosome quality control system (RQC), a ribosome-associated complex that mediates the extraction of incompletely synthesized nascent chains from stalled ribosomes and their subsequent degradation. Probably generates substrates for RQC. In Staphylococcus aureus (strain MSSA476), this protein is Endonuclease MutS2.